The sequence spans 385 residues: Lipid-A-disaccharide synthase (385 aa).

This sequence belongs to the LpxB family.

It carries out the reaction 2-N,3-O-bis[(3R)-3-hydroxytetradecanoyl]-alpha-D-glucosaminyl 1-phosphate + UDP-2-N,3-O-bis[(3R)-3-hydroxytetradecanoyl]-alpha-D-glucosamine = lipid A disaccharide (E. coli) + UDP + H(+). The enzyme catalyses a lipid X + a UDP-2-N,3-O-bis[(3R)-3-hydroxyacyl]-alpha-D-glucosamine = a lipid A disaccharide + UDP + H(+). The protein operates within glycolipid biosynthesis; lipid IV(A) biosynthesis; lipid IV(A) from (3R)-3-hydroxytetradecanoyl-[acyl-carrier-protein] and UDP-N-acetyl-alpha-D-glucosamine: step 5/6. Functionally, condensation of UDP-2,3-diacylglucosamine and 2,3-diacylglucosamine-1-phosphate to form lipid A disaccharide, a precursor of lipid A, a phosphorylated glycolipid that anchors the lipopolysaccharide to the outer membrane of the cell. The chain is Lipid-A-disaccharide synthase from Wigglesworthia glossinidia brevipalpis.